A 365-amino-acid chain; its full sequence is Zinc finger protein lsy-2 (365 aa).

A disordered region spans residues 1–36 (MLTRRNAKQSQRNSADQSLSEFNSSSMTHGSNQSVY). Residues 8–36 (KQSQRNSADQSLSEFNSSSMTHGSNQSVY) show a composition bias toward polar residues. 5 consecutive C2H2-type zinc fingers follow at residues 78–100 (HQCNVCNKIFVSYKGLQQHAVIH), 106–128 (FRCDICSKSFRFKSNLFEHRSVH), 134–156 (HACPYCGKTCRLKGNLKKHLRTH), 264–287 (HDCPVCKSQFMTRMDCVSHHTLEH), and 296–318 (FFCEKCYRPFADEASYNQHMSYH).

It localises to the nucleus speckle. Involved in transcriptional regulation. Required to specify left-right asymmetry of the ASE gustatory neurons, probably acting upstream of microRNA lsy-6. Involved in maintaining the distinction between somatic and germ cells, perhaps acting by repressing germ cell-specific genes in somatic cells. In Caenorhabditis elegans, this protein is Zinc finger protein lsy-2.